The chain runs to 69 residues: Putative defensin-like protein 312 (69 aa).

An N-terminal signal peptide occupies residues 1 to 19; sequence MSCFSFLVYFLLFIVTKMS. C45 and C57 are joined by a disulfide.

Belongs to the DEFL family.

The protein resides in the secreted. This Arabidopsis thaliana (Mouse-ear cress) protein is Putative defensin-like protein 312.